A 599-amino-acid chain; its full sequence is Aspartate--tRNA ligase (599 aa).

Glu-180 contacts L-aspartate. The aspartate stretch occupies residues 204-207 (QIFK). An L-aspartate-binding site is contributed by Arg-226. Residues 226–228 (RDE) and Gln-235 contribute to the ATP site. His-454 lines the L-aspartate pocket. An ATP-binding site is contributed by Glu-488. An L-aspartate-binding site is contributed by Arg-495. 540 to 543 (GLDR) lines the ATP pocket.

The protein belongs to the class-II aminoacyl-tRNA synthetase family. Type 1 subfamily. Homodimer.

Its subcellular location is the cytoplasm. The catalysed reaction is tRNA(Asp) + L-aspartate + ATP = L-aspartyl-tRNA(Asp) + AMP + diphosphate. Catalyzes the attachment of L-aspartate to tRNA(Asp) in a two-step reaction: L-aspartate is first activated by ATP to form Asp-AMP and then transferred to the acceptor end of tRNA(Asp). In Clostridium botulinum (strain Eklund 17B / Type B), this protein is Aspartate--tRNA ligase.